A 148-amino-acid polypeptide reads, in one-letter code: Cuticle protein 8 (148 aa).

5 consecutive repeat copies span residues 16–19, A22, 28–31, 37–40, and 44–47. The region spanning 58–128 is the Chitin-binding type R&amp;R domain; the sequence is YPKYEFNYGV…RTPGTHPVAV (71 aa).

Functionally, component of the cuticle of migratory locust which contains more than 100 different structural proteins. The sequence is that of Cuticle protein 8 from Locusta migratoria (Migratory locust).